The following is a 140-amino-acid chain: Cytochrome c-type biogenesis protein CcmE (140 aa).

Over 1–7 (MTKRQNR) the chain is Cytoplasmic. A helical; Signal-anchor for type II membrane protein transmembrane segment spans residues 8-28 (MVLVALLVIGVSLAGYLGLKA). Topologically, residues 29 to 140 (FNENLLYFLS…DALEKAKNKQ (112 aa)) are periplasmic. Heme contacts are provided by His120 and Tyr124.

Belongs to the CcmE/CycJ family.

The protein resides in the cell inner membrane. Its function is as follows. Heme chaperone required for the biogenesis of c-type cytochromes. Transiently binds heme delivered by CcmC and transfers the heme to apo-cytochromes in a process facilitated by CcmF and CcmH. This Vesicomyosocius okutanii subsp. Calyptogena okutanii (strain HA) protein is Cytochrome c-type biogenesis protein CcmE.